Consider the following 284-residue polypeptide: Ribosomal RNA small subunit methyltransferase A (284 aa).

S-adenosyl-L-methionine-binding residues include asparagine 26, leucine 28, glycine 53, glutamate 74, aspartate 97, and asparagine 127.

It belongs to the class I-like SAM-binding methyltransferase superfamily. rRNA adenine N(6)-methyltransferase family. RsmA subfamily.

Its subcellular location is the cytoplasm. The catalysed reaction is adenosine(1518)/adenosine(1519) in 16S rRNA + 4 S-adenosyl-L-methionine = N(6)-dimethyladenosine(1518)/N(6)-dimethyladenosine(1519) in 16S rRNA + 4 S-adenosyl-L-homocysteine + 4 H(+). Specifically dimethylates two adjacent adenosines (A1518 and A1519) in the loop of a conserved hairpin near the 3'-end of 16S rRNA in the 30S particle. May play a critical role in biogenesis of 30S subunits. In Anaeromyxobacter dehalogenans (strain 2CP-1 / ATCC BAA-258), this protein is Ribosomal RNA small subunit methyltransferase A.